We begin with the raw amino-acid sequence, 233 residues long: Probable RNA 2'-phosphotransferase (233 aa).

Belongs to the KptA/TPT1 family.

Removes the 2'-phosphate from RNA via an intermediate in which the phosphate is ADP-ribosylated by NAD followed by a presumed transesterification to release the RNA and generate ADP-ribose 1''-2''-cyclic phosphate (APPR&gt;P). May function as an ADP-ribosylase. The sequence is that of Probable RNA 2'-phosphotransferase from Hyperthermus butylicus (strain DSM 5456 / JCM 9403 / PLM1-5).